Consider the following 955-residue polypeptide: Isoleucine--tRNA ligase (955 aa).

Residues 60–70 (PYANGDLHIGH) carry the 'HIGH' region motif. E563 lines the L-isoleucyl-5'-AMP pocket. Residues 604 to 608 (KMSKS) carry the 'KMSKS' region motif. K607 provides a ligand contact to ATP. The Zn(2+) site is built by C926, C929, C946, and C949.

The protein belongs to the class-I aminoacyl-tRNA synthetase family. IleS type 1 subfamily. As to quaternary structure, monomer. The cofactor is Zn(2+).

It is found in the cytoplasm. The enzyme catalyses tRNA(Ile) + L-isoleucine + ATP = L-isoleucyl-tRNA(Ile) + AMP + diphosphate. Catalyzes the attachment of isoleucine to tRNA(Ile). As IleRS can inadvertently accommodate and process structurally similar amino acids such as valine, to avoid such errors it has two additional distinct tRNA(Ile)-dependent editing activities. One activity is designated as 'pretransfer' editing and involves the hydrolysis of activated Val-AMP. The other activity is designated 'posttransfer' editing and involves deacylation of mischarged Val-tRNA(Ile). The sequence is that of Isoleucine--tRNA ligase from Cyanothece sp. (strain PCC 7425 / ATCC 29141).